The sequence spans 381 residues: Chaperone protein DnaJ (381 aa).

Residues 5-70 (DYYEVLGCDR…QKRGAYDRYG (66 aa)) enclose the J domain. The CR-type zinc-finger motif lies at 136–214 (GKTAQISIPT…CGGAGRVTRE (79 aa)). The Zn(2+) site is built by Cys149, Cys152, Cys166, Cys169, Cys188, Cys191, Cys202, and Cys205. CXXCXGXG motif repeat units lie at residues 149–156 (CEVCSGSG), 166–173 (CRTCNGAG), 188–195 (CPSCQGRG), and 202–209 (CPNCGGAG).

Belongs to the DnaJ family. Homodimer. The cofactor is Zn(2+).

Its subcellular location is the cytoplasm. In terms of biological role, participates actively in the response to hyperosmotic and heat shock by preventing the aggregation of stress-denatured proteins and by disaggregating proteins, also in an autonomous, DnaK-independent fashion. Unfolded proteins bind initially to DnaJ; upon interaction with the DnaJ-bound protein, DnaK hydrolyzes its bound ATP, resulting in the formation of a stable complex. GrpE releases ADP from DnaK; ATP binding to DnaK triggers the release of the substrate protein, thus completing the reaction cycle. Several rounds of ATP-dependent interactions between DnaJ, DnaK and GrpE are required for fully efficient folding. Also involved, together with DnaK and GrpE, in the DNA replication of plasmids through activation of initiation proteins. This Azorhizobium caulinodans (strain ATCC 43989 / DSM 5975 / JCM 20966 / LMG 6465 / NBRC 14845 / NCIMB 13405 / ORS 571) protein is Chaperone protein DnaJ.